The sequence spans 75 residues: MSASVRGNSKNPQSTSAITTLTDKLLEDISGDFETLQKQFSEKLETMSTRLDQLEESMREAMNKKSSVSPVTSTE.

Belongs to the HSBP1 family.

This is an uncharacterized protein from Schizosaccharomyces pombe (strain 972 / ATCC 24843) (Fission yeast).